A 260-amino-acid polypeptide reads, in one-letter code: DNA repair protein RecO (260 aa).

Belongs to the RecO family.

Involved in DNA repair and RecF pathway recombination. The polypeptide is DNA repair protein RecO (Streptococcus gordonii (strain Challis / ATCC 35105 / BCRC 15272 / CH1 / DL1 / V288)).